The sequence spans 182 residues: NADH-quinone oxidoreductase subunit C 2 (182 aa).

The interval 153–182 is disordered; the sequence is YKDKLNPFGAEGPPPTQPDLATNDIPQGGR.

This sequence belongs to the complex I 30 kDa subunit family. As to quaternary structure, NDH-1 is composed of 14 different subunits. Subunits NuoB, C, D, E, F, and G constitute the peripheral sector of the complex.

Its subcellular location is the cell inner membrane. It carries out the reaction a quinone + NADH + 5 H(+)(in) = a quinol + NAD(+) + 4 H(+)(out). Its function is as follows. NDH-1 shuttles electrons from NADH, via FMN and iron-sulfur (Fe-S) centers, to quinones in the respiratory chain. The immediate electron acceptor for the enzyme in this species is believed to be ubiquinone. Couples the redox reaction to proton translocation (for every two electrons transferred, four hydrogen ions are translocated across the cytoplasmic membrane), and thus conserves the redox energy in a proton gradient. This Rhizobium meliloti (strain 1021) (Ensifer meliloti) protein is NADH-quinone oxidoreductase subunit C 2.